The primary structure comprises 253 residues: TasA anchoring/assembly protein (253 aa).

The first 32 residues, 1 to 32 (MFRLFHNQQKAKTKLKVLLIFQLSVIFSLTAA), serve as a signal peptide directing secretion. The tract at residues 50–57 (TFDVSLQT) is important for TasA fiber formation. Over residues 190–241 (EKPTVPKKETKSDVKKENETTQKDIPEKTMKEETSQEAVTKEKETQSDQKES) the composition is skewed to basic and acidic residues. Positions 190–253 (EKPTVPKKET…EDEKSNEADQ (64 aa)) are disordered.

It is found in the secreted. The protein resides in the cell wall. Its function is as follows. Required for biofilm formation. Required for the proper anchoring and polymerization of TasA amyloid fibers at the cell surface. Is also a minor component of TasA fibers. This Bacillus subtilis (strain 168) protein is TasA anchoring/assembly protein.